The sequence spans 617 residues: uncharacterized protein (617 aa).

Residues 10-30 (AFFFFFVSLILLFLSPSYSDV) form a helical membrane-spanning segment. The disordered stretch occupies residues 34–58 (ESDPIPYENSDASPGVVTSSESDRQ). A compositionally biased stretch (polar residues) spans 43-53 (SDASPGVVTSS). The stretch at 60 to 86 (VSLHRLEELVRNLTELVARLDAKLSET) forms a coiled coil. Residues 473–493 (MLWSSPVFFFILFLFGAWHFF) traverse the membrane as a helical segment. Low complexity predominate over residues 511–529 (STTMSSSSTTTAQNSSAFS). A disordered region spans residues 511 to 617 (STTMSSSSTT…GNNKALDDES (107 aa)). Residues 531–543 (STRRNDDHMDLRR) show a composition bias toward basic and acidic residues. A compositionally biased stretch (polar residues) spans 563 to 584 (VGSNDPSSRAPVETTNYRTTAQ). Residues 590-599 (GGSGLDSGGF) show a composition bias toward gly residues.

The protein localises to the membrane. This is an uncharacterized protein from Arabidopsis thaliana (Mouse-ear cress).